The primary structure comprises 658 residues: UvrABC system protein B (658 aa).

Positions A26–P414 constitute a Helicase ATP-binding domain. G39–T46 contacts ATP. The short motif at Y92–I115 is the Beta-hairpin element. The region spanning Q430–I592 is the Helicase C-terminal domain. The region spanning D622–G658 is the UVR domain.

The protein belongs to the UvrB family. As to quaternary structure, forms a heterotetramer with UvrA during the search for lesions. Interacts with UvrC in an incision complex.

It is found in the cytoplasm. The UvrABC repair system catalyzes the recognition and processing of DNA lesions. A damage recognition complex composed of 2 UvrA and 2 UvrB subunits scans DNA for abnormalities. Upon binding of the UvrA(2)B(2) complex to a putative damaged site, the DNA wraps around one UvrB monomer. DNA wrap is dependent on ATP binding by UvrB and probably causes local melting of the DNA helix, facilitating insertion of UvrB beta-hairpin between the DNA strands. Then UvrB probes one DNA strand for the presence of a lesion. If a lesion is found the UvrA subunits dissociate and the UvrB-DNA preincision complex is formed. This complex is subsequently bound by UvrC and the second UvrB is released. If no lesion is found, the DNA wraps around the other UvrB subunit that will check the other stand for damage. This is UvrABC system protein B from Listeria innocua serovar 6a (strain ATCC BAA-680 / CLIP 11262).